Reading from the N-terminus, the 571-residue chain is DM7 family protein CG15332 (571 aa).

The segment at 440 to 472 is disordered; sequence TRDDGINTADYQSQFPELEPEPEPEPEDEGEDV. Acidic residues predominate over residues 457-471; the sequence is LEPEPEPEPEDEGED.

Belongs to the DM7 family.

The chain is DM7 family protein CG15332 from Drosophila melanogaster (Fruit fly).